Consider the following 451-residue polypeptide: Uronate isomerase (451 aa).

Belongs to the metallo-dependent hydrolases superfamily. Uronate isomerase family. As to quaternary structure, homotrimer.

The catalysed reaction is D-glucuronate = D-fructuronate. It carries out the reaction aldehydo-D-galacturonate = keto-D-tagaturonate. It participates in carbohydrate metabolism; pentose and glucuronate interconversion. The sequence is that of Uronate isomerase from Thermotoga maritima (strain ATCC 43589 / DSM 3109 / JCM 10099 / NBRC 100826 / MSB8).